The sequence spans 309 residues: Type II methyltransferase M.HgiDI (309 aa).

In terms of domain architecture, SAM-dependent MTase C5-type spans Met1 to Pro297. Cys75 is a catalytic residue.

Belongs to the class I-like SAM-binding methyltransferase superfamily. C5-methyltransferase family.

The catalysed reaction is a 2'-deoxycytidine in DNA + S-adenosyl-L-methionine = a 5-methyl-2'-deoxycytidine in DNA + S-adenosyl-L-homocysteine + H(+). Its function is as follows. A methylase that recognizes the double-stranded sequence 5'-GRCGYC-3', methylates C-? on both strands, and protects the DNA from cleavage by the HgiDI endonuclease. The sequence is that of Type II methyltransferase M.HgiDI from Herpetosiphon aurantiacus (Herpetosiphon giganteus).